The following is a 539-amino-acid chain: Chaperonin GroEL (539 aa).

Residues 29 to 32 (TIGP), 86 to 90 (DGTTT), G413, 476 to 478 (NAA), and D492 each bind ATP.

It belongs to the chaperonin (HSP60) family. In terms of assembly, forms a cylinder of 14 subunits composed of two heptameric rings stacked back-to-back. Interacts with the co-chaperonin GroES.

The protein localises to the cytoplasm. It catalyses the reaction ATP + H2O + a folded polypeptide = ADP + phosphate + an unfolded polypeptide.. Together with its co-chaperonin GroES, plays an essential role in assisting protein folding. The GroEL-GroES system forms a nano-cage that allows encapsulation of the non-native substrate proteins and provides a physical environment optimized to promote and accelerate protein folding. This chain is Chaperonin GroEL, found in Staphylococcus epidermidis (strain ATCC 12228 / FDA PCI 1200).